A 143-amino-acid chain; its full sequence is MGKCRGLRTARKLRSHRRDHKWHDKQYKKAHLGTALKANPFGGASHAKGIVLEKVGVEAKQPNSAIRKCVRVQLIKNGKKITAFVPNDGCLNFIEENDEVLVAGFGRKGHAVGDIPGVRFKVVKVANVSLLALYKGKKERPRS.

The segment covering 1 to 20 (MGKCRGLRTARKLRSHRRDH) has biased composition (basic residues). The segment at 1-26 (MGKCRGLRTARKLRSHRRDHKWHDKQ) is disordered. Residue K37 forms a Glycyl lysine isopeptide (Lys-Gly) (interchain with G-Cter in SUMO2) linkage. K54 is subject to N6-succinyllysine. P62 is subject to 3-hydroxyproline. K135 carries the post-translational modification N6-acetyllysine.

It belongs to the universal ribosomal protein uS12 family. Component of the 40S small ribosomal subunit. Part of the small subunit (SSU) processome, composed of more than 70 proteins and the RNA chaperone small nucleolar RNA (snoRNA) U3. As to quaternary structure, (Microbial infection) Interacts with the African swine fever virus (ASFV) ubiquitin-conjugating enzyme UBCv1; this interaction probably plays a role in the viral regulation of host protein synthesis. In terms of processing, hydroxylation at Pro-62 affects translation termination efficiency.

The protein resides in the cytoplasm. Its subcellular location is the cytosol. It is found in the rough endoplasmic reticulum. The protein localises to the nucleus. It localises to the nucleolus. In terms of biological role, component of the ribosome, a large ribonucleoprotein complex responsible for the synthesis of proteins in the cell. The small ribosomal subunit (SSU) binds messenger RNAs (mRNAs) and translates the encoded message by selecting cognate aminoacyl-transfer RNA (tRNA) molecules. The large subunit (LSU) contains the ribosomal catalytic site termed the peptidyl transferase center (PTC), which catalyzes the formation of peptide bonds, thereby polymerizing the amino acids delivered by tRNAs into a polypeptide chain. The nascent polypeptides leave the ribosome through a tunnel in the LSU and interact with protein factors that function in enzymatic processing, targeting, and the membrane insertion of nascent chains at the exit of the ribosomal tunnel. Plays an important role in translational accuracy. Part of the small subunit (SSU) processome, first precursor of the small eukaryotic ribosomal subunit. During the assembly of the SSU processome in the nucleolus, many ribosome biogenesis factors, an RNA chaperone and ribosomal proteins associate with the nascent pre-rRNA and work in concert to generate RNA folding, modifications, rearrangements and cleavage as well as targeted degradation of pre-ribosomal RNA by the RNA exosome. The chain is Small ribosomal subunit protein uS12 (RPS23) from Sus scrofa (Pig).